The following is a 669-amino-acid chain: DNA ligase 2 (669 aa).

NAD(+)-binding positions include Asp-35–Asp-39 and Ser-83–Leu-84. The N6-AMP-lysine intermediate role is filled by Lys-125. NAD(+)-binding residues include Arg-147, Glu-181, and Lys-317. Zn(2+) is bound by residues Cys-410, Cys-413, Cys-426, and Cys-432. Residues Val-590–Met-669 form the BRCT domain.

This sequence belongs to the NAD-dependent DNA ligase family. LigA subfamily. It depends on Mg(2+) as a cofactor. The cofactor is Mn(2+).

It carries out the reaction NAD(+) + (deoxyribonucleotide)n-3'-hydroxyl + 5'-phospho-(deoxyribonucleotide)m = (deoxyribonucleotide)n+m + AMP + beta-nicotinamide D-nucleotide.. Its function is as follows. DNA ligase that catalyzes the formation of phosphodiester linkages between 5'-phosphoryl and 3'-hydroxyl groups in double-stranded DNA using NAD as a coenzyme and as the energy source for the reaction. It is essential for DNA replication and repair of damaged DNA. This Clostridium acetobutylicum (strain ATCC 824 / DSM 792 / JCM 1419 / IAM 19013 / LMG 5710 / NBRC 13948 / NRRL B-527 / VKM B-1787 / 2291 / W) protein is DNA ligase 2.